The following is a 244-amino-acid chain: ATP synthase subunit b 2 (244 aa).

The helical transmembrane segment at 2-22 (LIDWFTIVAQIINFLILVFLL) threads the bilayer.

The protein belongs to the ATPase B chain family. In terms of assembly, F-type ATPases have 2 components, F(1) - the catalytic core - and F(0) - the membrane proton channel. F(1) has five subunits: alpha(3), beta(3), gamma(1), delta(1), epsilon(1). F(0) has four main subunits: a(1), b(1), b'(1) and c(10-14). The alpha and beta chains form an alternating ring which encloses part of the gamma chain. F(1) is attached to F(0) by a central stalk formed by the gamma and epsilon chains, while a peripheral stalk is formed by the delta, b and b' chains.

The protein resides in the cellular thylakoid membrane. Its function is as follows. F(1)F(0) ATP synthase produces ATP from ADP in the presence of a proton or sodium gradient. F-type ATPases consist of two structural domains, F(1) containing the extramembraneous catalytic core and F(0) containing the membrane proton channel, linked together by a central stalk and a peripheral stalk. During catalysis, ATP synthesis in the catalytic domain of F(1) is coupled via a rotary mechanism of the central stalk subunits to proton translocation. Component of the F(0) channel, it forms part of the peripheral stalk, linking F(1) to F(0). The sequence is that of ATP synthase subunit b 2 from Crocosphaera subtropica (strain ATCC 51142 / BH68) (Cyanothece sp. (strain ATCC 51142)).